The primary structure comprises 686 residues: Methionine--tRNA ligase (686 aa).

A 'HIGH' region motif is present at residues 15 to 25 (PYANGSIHLGH). Residues cysteine 146, cysteine 149, cysteine 159, and cysteine 162 each contribute to the Zn(2+) site. The 'KMSKS' region motif lies at 332-336 (KMSKS). Lysine 335 lines the ATP pocket. Positions 585-686 (AFEAVDMRIA…EGAQPGMRVM (102 aa)) constitute a tRNA-binding domain.

This sequence belongs to the class-I aminoacyl-tRNA synthetase family. MetG type 1 subfamily. As to quaternary structure, homodimer. Zn(2+) is required as a cofactor.

The protein localises to the cytoplasm. The enzyme catalyses tRNA(Met) + L-methionine + ATP = L-methionyl-tRNA(Met) + AMP + diphosphate. Functionally, is required not only for elongation of protein synthesis but also for the initiation of all mRNA translation through initiator tRNA(fMet) aminoacylation. The protein is Methionine--tRNA ligase of Aliivibrio salmonicida (strain LFI1238) (Vibrio salmonicida (strain LFI1238)).